The chain runs to 489 residues: Cryptochrome DASH (489 aa).

The Photolyase/cryptochrome alpha/beta domain occupies 6–140; sequence PTVLVWFRND…EAKGYWGSTL (135 aa).

The protein belongs to the DNA photolyase class-1 family. Requires FAD as cofactor. (6R)-5,10-methylene-5,6,7,8-tetrahydrofolate is required as a cofactor.

Functionally, may have a photoreceptor function. Binds DNA; represses transcription of at least 8 genes, including slr0364 and slr1866. Does not encode a DNA photolyase function. Its disruption does not affect circadian rhythm. The polypeptide is Cryptochrome DASH (cry) (Synechocystis sp. (strain ATCC 27184 / PCC 6803 / Kazusa)).